The following is a 560-amino-acid chain: Factor VII-activating protease (560 aa).

Residues 1-23 (MFARMSDLHVLLLMALVGKTACG) form the signal peptide. N-linked (GlcNAc...) asparagine glycosylation is present at Asn54. EGF-like domains follow at residues 73 to 109 (QADPCQPNPCEHGGDCLVHGSTFTCSCLAPFSGNKCQ), 111 to 148 (VQNTCKDNPCGRGQCLITQSPPYYRCVCKHPYTGPSCS), and 150 to 188 (VVPVCRPNPCQNGATCSRHKRRSKFTCACPDQFKGKFCE). Cystine bridges form between Cys77-Cys88, Cys82-Cys97, Cys99-Cys108, Cys115-Cys125, Cys120-Cys136, Cys138-Cys147, Cys154-Cys165, Cys159-Cys176, Cys178-Cys187, Cys194-Cys276, Cys215-Cys257, Cys246-Cys271, Cys301-Cys435, Cys347-Cys363, Cys355-Cys424, Cys447-Cys515, Cys477-Cys493, and Cys505-Cys533. The 84-residue stretch at 193 to 276 (DCYVGDGYSY…KWEYCDVSAC (84 aa)) folds into the Kringle domain. N-linked (GlcNAc...) asparagine glycosylation occurs at Asn207. Residues 314-555 (IYGGFKSTAG…FLNWIKATIK (242 aa)) form the Peptidase S1 domain. Active-site charge relay system residues include His362 and Asp411. Residue Ser509 is the Charge relay system of the active site.

Belongs to the peptidase S1 family. As to quaternary structure, heterodimer; disulfide-linked. Heterodimer of a 50 kDa heavy and a 27 kDa light chain linked by a disulfide bond. Proteolytic cleavage at Gly-23 or Met-27 can give rise to the 50 kDa heavy chain (HC) and cleavage at Arg-313 or Lys-319 can give rise to the 27 kDa light chain (LC). The HC can undergo further proteolytic cleavage giving rise to a 26 kDa fragment. The LC can undergo further proteolytic cleavage at Arg-313 leading to a 17-kDa fragment and at Arg-480 leading to a 8-kDa fragment. In terms of tissue distribution, ubiquitously expressed.

The protein localises to the secreted. Cleaves the alpha-chain at multiple sites and the beta-chain between 'Lys-53' and 'Lys-54' but not the gamma-chain of fibrinogen and therefore does not initiate the formation of the fibrin clot and does not cause the fibrinolysis directly. It does not cleave (activate) prothrombin and plasminogen but converts the inactive single chain urinary plasminogen activator (pro-urokinase) to the active two chain form. Activates coagulation factor VII. May function as a tumor suppressor negatively regulating cell proliferation and cell migration. The polypeptide is Factor VII-activating protease (Homo sapiens (Human)).